We begin with the raw amino-acid sequence, 448 residues long: 4-hydroxybenzoate transporter PcaK (448 aa).

At Met-1–Ile-30 the chain is on the cytoplasmic side. Residues Val-31–Ile-51 form a helical membrane-spanning segment. The Periplasmic portion of the chain corresponds to Ala-52–Gly-67. A helical transmembrane segment spans residues Pro-68–Ala-88. Over Asp-89 to Lys-94 the chain is Cytoplasmic. The helical transmembrane segment at Leu-95 to Thr-115 threads the bilayer. The Periplasmic segment spans residues Asn-116–Gln-119. Residues Leu-120 to Thr-140 form a helical membrane-spanning segment. The Cytoplasmic segment spans residues Leu-141 to Ser-152. A helical membrane pass occupies residues Leu-153 to Ser-173. The Periplasmic portion of the chain corresponds to Ala-174 to Ser-184. The helical transmembrane segment at Leu-185 to Pro-205 threads the bilayer. The Cytoplasmic portion of the chain corresponds to Glu-206 to Tyr-261. The chain crosses the membrane as a helical span at residues Ser-262–Leu-282. At Thr-283–Ala-301 the chain is on the periplasmic side. Residues Phe-302 to Met-322 traverse the membrane as a helical segment. At Asp-323–Lys-329 the chain is on the cytoplasmic side. The chain crosses the membrane as a helical span at residues Val-330–Gly-350. A topological domain (periplasmic) is located at residue Gln-351. A helical membrane pass occupies residues Val-352–Ala-372. The Cytoplasmic portion of the chain corresponds to Met-373–Arg-398. The helical transmembrane segment at Phe-399–Glu-419 threads the bilayer. The Periplasmic portion of the chain corresponds to Gln-420 to Val-421. Residues Leu-422–Val-442 traverse the membrane as a helical segment. Residues Ser-443–Gly-448 are Cytoplasmic-facing.

This sequence belongs to the major facilitator superfamily. Aromatic acid:H(+) symporter (AAHS) (TC 2.A.1.15) family.

It localises to the cell inner membrane. Transports 4-hydroxybenzoate (4-HBA) and protocatechuate across the membrane. Driven by the proton motive force. Also functions as a chemoreceptor, which is required for chemotaxis to aromatic acids. This chain is 4-hydroxybenzoate transporter PcaK (pcaK), found in Pseudomonas aeruginosa (strain ATCC 15692 / DSM 22644 / CIP 104116 / JCM 14847 / LMG 12228 / 1C / PRS 101 / PAO1).